The chain runs to 237 residues: UPF0174 protein YaaW (237 aa).

It belongs to the UPF0174 family.

The polypeptide is UPF0174 protein YaaW (Escherichia coli O157:H7).